Consider the following 158-residue polypeptide: Transcriptional repressor NrdR (158 aa).

A zinc finger lies at 3–34 (CPSCQNTDSRVLESRAADAGRSVRRRRECLHC). Residues 49–139 (ITVLKRNGNR…VYRDFRGVND (91 aa)) form the ATP-cone domain.

This sequence belongs to the NrdR family. The cofactor is Zn(2+).

In terms of biological role, negatively regulates transcription of bacterial ribonucleotide reductase nrd genes and operons by binding to NrdR-boxes. This Prochlorococcus marinus (strain MIT 9313) protein is Transcriptional repressor NrdR.